We begin with the raw amino-acid sequence, 410 residues long: Probable ATP-dependent RNA helicase MG308 (410 aa).

Positions 26-179 (VFKLWPFQNI…KKQVINTKVI (154 aa)) constitute a Helicase ATP-binding domain. 39 to 46 (AETGSGKT) provides a ligand contact to ATP. Positions 126-129 (DEID) match the DEID box motif. Residues 190–357 (LVKHFVVHLN…DLKFLTENNQ (168 aa)) form the Helicase C-terminal domain.

This sequence belongs to the DEAD box helicase family.

It catalyses the reaction ATP + H2O = ADP + phosphate + H(+). The protein is Probable ATP-dependent RNA helicase MG308 of Mycoplasma genitalium (strain ATCC 33530 / DSM 19775 / NCTC 10195 / G37) (Mycoplasmoides genitalium).